The following is a 159-amino-acid chain: Phosphopantetheine adenylyltransferase (159 aa).

A substrate-binding site is contributed by Ser8. ATP-binding positions include 8–9 (SF) and His16. Lys40, Thr72, and Arg86 together coordinate substrate. Residues 87-89 (GLR), Glu97, and 122-128 (YSFLSSS) contribute to the ATP site.

It belongs to the bacterial CoaD family. As to quaternary structure, homohexamer. Requires Mg(2+) as cofactor.

It is found in the cytoplasm. It carries out the reaction (R)-4'-phosphopantetheine + ATP + H(+) = 3'-dephospho-CoA + diphosphate. The protein operates within cofactor biosynthesis; coenzyme A biosynthesis; CoA from (R)-pantothenate: step 4/5. In terms of biological role, reversibly transfers an adenylyl group from ATP to 4'-phosphopantetheine, yielding dephospho-CoA (dPCoA) and pyrophosphate. In Synechocystis sp. (strain ATCC 27184 / PCC 6803 / Kazusa), this protein is Phosphopantetheine adenylyltransferase.